Consider the following 472-residue polypeptide: Tubulin gamma chain (472 aa).

Residue 142–148 (AGGTGSG) participates in GTP binding.

It belongs to the tubulin family. In terms of assembly, component of the gamma-tubulin small complex (gamma-TuSC) composed of tubulin gamma chain, gamma-tubulin complex protein 2 (GCP2) and gamma-tubulin complex protein 3 (GCP3). Interacts with GCP2 and GCP3. Interacts with EB1.

The protein resides in the cytoplasm. It localises to the cytoskeleton. Its subcellular location is the flagellum axoneme. The protein localises to the flagellum basal body. It is found in the spindle. The protein resides in the microtubule organizing center. In terms of biological role, tubulin is the major constituent of microtubules (Potential). The gamma chain is found at microtubule organizing centers (MTOC) such as the centrosome. Component of the gamma-tubulin small complex (gamma-TuSC) involved in microtubule nucleation for the formation of median bodies and in the biogenesis of flagella. Gamma-TuSC may be required for the correct positioning of EB1 within the trophozoites. This chain is Tubulin gamma chain, found in Giardia intestinalis (strain ATCC 50803 / WB clone C6) (Giardia lamblia).